Here is a 146-residue protein sequence, read N- to C-terminus: Large ribosomal subunit protein uL15 (146 aa).

The segment at 1-54 is disordered; the sequence is MTLRLNELAPAEGAKREHRRLGRGIGSGVGKTGGRGIKGQKSRKSGGVRPGFEG. A compositionally biased stretch (gly residues) spans 23 to 37; it reads RGIGSGVGKTGGRGI.

Belongs to the universal ribosomal protein uL15 family. As to quaternary structure, part of the 50S ribosomal subunit.

In terms of biological role, binds to the 23S rRNA. The protein is Large ribosomal subunit protein uL15 of Acinetobacter baumannii (strain SDF).